We begin with the raw amino-acid sequence, 149 residues long: Large ribosomal subunit protein uL15 (149 aa).

A disordered region spans residues 14–63 (ASRKRVGRGSGSGLGCTSGKGNKGQNARAGGGVRPGFEGGQMPLQRRLPK). Gly residues-rich tracts occupy residues 21 to 35 (RGSGSGLGCTSGKGN) and 42 to 52 (AGGGVRPGFEG).

It belongs to the universal ribosomal protein uL15 family. As to quaternary structure, part of the 50S ribosomal subunit.

Functionally, binds to the 23S rRNA. In Nitratidesulfovibrio vulgaris (strain DSM 19637 / Miyazaki F) (Desulfovibrio vulgaris), this protein is Large ribosomal subunit protein uL15.